The sequence spans 97 residues: UPF0235 protein APP7_1431 (97 aa).

It belongs to the UPF0235 family.

The sequence is that of UPF0235 protein APP7_1431 from Actinobacillus pleuropneumoniae serotype 7 (strain AP76).